A 496-amino-acid polypeptide reads, in one-letter code: Polyphosphate:AMP phosphotransferase (496 aa).

PPK2 stretches follow at residues 11–234 and 269–495; these read IDKD…LQAA and LDKD…YKKD.

It belongs to the polyphosphate kinase 2 (PPK2) family. Class II subfamily. Homodimer. The cofactor is Mg(2+).

The enzyme catalyses [phosphate](n) + ADP = [phosphate](n+1) + AMP. Its function is as follows. Uses inorganic polyphosphate (polyP) as a donor to convert AMP to ADP. Can also convert GMP to GDP, with lower efficiency. Cannot dephosphorylate ADP in the presence of polyP. The sequence is that of Polyphosphate:AMP phosphotransferase from Pseudomonas aeruginosa (strain ATCC 15692 / DSM 22644 / CIP 104116 / JCM 14847 / LMG 12228 / 1C / PRS 101 / PAO1).